Consider the following 693-residue polypeptide: DNA ligase (693 aa).

Residues 40-44 (DSEYD), 89-90 (SL), and Glu-121 contribute to the NAD(+) site. Lys-123 functions as the N6-AMP-lysine intermediate in the catalytic mechanism. 4 residues coordinate NAD(+): Arg-144, Glu-179, Lys-295, and Lys-319. 4 residues coordinate Zn(2+): Cys-413, Cys-416, Cys-431, and Cys-437. The BRCT domain maps to 610 to 693 (REQNILTGKI…AFIKCLEKEV (84 aa)).

The protein belongs to the NAD-dependent DNA ligase family. LigA subfamily. The cofactor is Mg(2+). Mn(2+) is required as a cofactor.

It carries out the reaction NAD(+) + (deoxyribonucleotide)n-3'-hydroxyl + 5'-phospho-(deoxyribonucleotide)m = (deoxyribonucleotide)n+m + AMP + beta-nicotinamide D-nucleotide.. DNA ligase that catalyzes the formation of phosphodiester linkages between 5'-phosphoryl and 3'-hydroxyl groups in double-stranded DNA using NAD as a coenzyme and as the energy source for the reaction. It is essential for DNA replication and repair of damaged DNA. This Rickettsia typhi (strain ATCC VR-144 / Wilmington) protein is DNA ligase.